The following is an 86-amino-acid chain: Small ribosomal subunit protein bS20 (86 aa).

This sequence belongs to the bacterial ribosomal protein bS20 family.

Binds directly to 16S ribosomal RNA. In Rhodococcus opacus (strain B4), this protein is Small ribosomal subunit protein bS20.